Reading from the N-terminus, the 307-residue chain is Malate dehydrogenase (307 aa).

NAD(+) contacts are provided by residues 8 to 13 and aspartate 33; that span reads GAGRVG. Substrate contacts are provided by arginine 82 and arginine 88. Residues asparagine 95 and 118 to 120 contribute to the NAD(+) site; that span reads VSN. Substrate contacts are provided by asparagine 120 and arginine 151. The active-site Proton acceptor is histidine 175.

This sequence belongs to the LDH/MDH superfamily. MDH type 3 family.

The catalysed reaction is (S)-malate + NAD(+) = oxaloacetate + NADH + H(+). Functionally, catalyzes the reversible oxidation of malate to oxaloacetate. This Thioalkalivibrio sulfidiphilus (strain HL-EbGR7) protein is Malate dehydrogenase.